A 204-amino-acid chain; its full sequence is Cytochrome c biogenesis ATP-binding export protein CcmA (204 aa).

An ABC transporter domain is found at 3 to 204; it reads LTVTDLAIAR…PLDDPDGDFL (202 aa). 35–42 serves as a coordination point for ATP; that stretch reads GPNGAGKT.

This sequence belongs to the ABC transporter superfamily. CcmA exporter (TC 3.A.1.107) family. In terms of assembly, the complex is composed of two ATP-binding proteins (CcmA) and two transmembrane proteins (CcmB).

The protein resides in the cell membrane. The enzyme catalyses heme b(in) + ATP + H2O = heme b(out) + ADP + phosphate + H(+). In terms of biological role, part of the ABC transporter complex CcmAB involved in the biogenesis of c-type cytochromes; once thought to export heme, this seems not to be the case, but its exact role is uncertain. Responsible for energy coupling to the transport system. The chain is Cytochrome c biogenesis ATP-binding export protein CcmA from Ruegeria pomeroyi (strain ATCC 700808 / DSM 15171 / DSS-3) (Silicibacter pomeroyi).